We begin with the raw amino-acid sequence, 251 residues long: Cytochrome c oxidase subunit 2 (251 aa).

Positions 1 to 15 (MLDLLRLQLTTFIMN) are cleaved as a propeptide — removed in mature form. The Mitochondrial intermembrane portion of the chain corresponds to 16–30 (DVPTPYACYFQDSAT). A helical transmembrane segment spans residues 31-64 (PNQEGILELHDNIMFYLLVILGLVSWMLYTIVMT). Over 65 to 78 (YSKNPIAYKYIKHG) the chain is Mitochondrial matrix. A helical membrane pass occupies residues 79-108 (QTIEVIWTIFPAVILLIIAFPSFILLYLCD). Topologically, residues 109–251 (EVISPAMTIK…PKFLEWLNEQ (143 aa)) are mitochondrial intermembrane. Cu cation-binding residues include His-186, Cys-221, Glu-223, Cys-225, His-229, and Met-232. Glu-223 serves as a coordination point for Mg(2+).

This sequence belongs to the cytochrome c oxidase subunit 2 family. In terms of assembly, component of the cytochrome c oxidase (complex IV, CIV), a multisubunit enzyme composed of 12 subunits. The complex is composed of a catalytic core of 3 subunits COX1, COX2 and COX3, encoded in the mitochondrial DNA, and 9 supernumerary subunits COX4, COX5A (or COX5B), COX6, COX7, COX8, COX9, COX12, COX13 and COX26, which are encoded in the nuclear genome. The complex exists as a monomer or a dimer and forms supercomplexes (SCs) in the inner mitochondrial membrane with a dimer of ubiquinol-cytochrome c oxidoreductase (cytochrome b-c1 complex, complex III, CIII), resulting in 2 different assemblies (supercomplexes III(2)IV and III(2)IV(2)). The cofactor is Cu cation. In terms of processing, the N-terminal sequence of COX2 is processed by IMP1.

The protein resides in the mitochondrion inner membrane. It catalyses the reaction 4 Fe(II)-[cytochrome c] + O2 + 8 H(+)(in) = 4 Fe(III)-[cytochrome c] + 2 H2O + 4 H(+)(out). Its function is as follows. Component of the cytochrome c oxidase, the last enzyme in the mitochondrial electron transport chain which drives oxidative phosphorylation. The respiratory chain contains 3 multisubunit complexes succinate dehydrogenase (complex II, CII), ubiquinol-cytochrome c oxidoreductase (cytochrome b-c1 complex, complex III, CIII) and cytochrome c oxidase (complex IV, CIV), that cooperate to transfer electrons derived from NADH and succinate to molecular oxygen, creating an electrochemical gradient over the inner membrane that drives transmembrane transport and the ATP synthase. Cytochrome c oxidase is the component of the respiratory chain that catalyzes the reduction of oxygen to water. Electrons originating from reduced cytochrome c in the intermembrane space (IMS) are transferred via the dinuclear copper A center (CU(A)) of COX2 and heme A of COX1 to the active site in COX1, a binuclear center (BNC) formed by heme A3 and copper B (CU(B)). The BNC reduces molecular oxygen to 2 water molecules unsing 4 electrons from cytochrome c in the IMS and 4 protons from the mitochondrial matrix. COX2 is a catalytic core subunit which transfers the electrons from cytochrome c via its dinuclear copper A center (CU(A)) to the BNC of the COX1. This is Cytochrome c oxidase subunit 2 (COX2) from Saccharomyces cerevisiae (strain ATCC 204508 / S288c) (Baker's yeast).